A 170-amino-acid polypeptide reads, in one-letter code: Crossover junction endodeoxyribonuclease RuvC (170 aa).

Catalysis depends on residues Asp12, Glu72, and Asp144. Mg(2+) is bound by residues Asp12, Glu72, and Asp144.

It belongs to the RuvC family. In terms of assembly, homodimer which binds Holliday junction (HJ) DNA. The HJ becomes 2-fold symmetrical on binding to RuvC with unstacked arms; it has a different conformation from HJ DNA in complex with RuvA. In the full resolvosome a probable DNA-RuvA(4)-RuvB(12)-RuvC(2) complex forms which resolves the HJ. Mg(2+) is required as a cofactor.

It localises to the cytoplasm. The enzyme catalyses Endonucleolytic cleavage at a junction such as a reciprocal single-stranded crossover between two homologous DNA duplexes (Holliday junction).. In terms of biological role, the RuvA-RuvB-RuvC complex processes Holliday junction (HJ) DNA during genetic recombination and DNA repair. Endonuclease that resolves HJ intermediates. Cleaves cruciform DNA by making single-stranded nicks across the HJ at symmetrical positions within the homologous arms, yielding a 5'-phosphate and a 3'-hydroxyl group; requires a central core of homology in the junction. The consensus cleavage sequence is 5'-(A/T)TT(C/G)-3'. Cleavage occurs on the 3'-side of the TT dinucleotide at the point of strand exchange. HJ branch migration catalyzed by RuvA-RuvB allows RuvC to scan DNA until it finds its consensus sequence, where it cleaves and resolves the cruciform DNA. This chain is Crossover junction endodeoxyribonuclease RuvC, found in Nitrobacter hamburgensis (strain DSM 10229 / NCIMB 13809 / X14).